Here is a 69-residue protein sequence, read N- to C-terminus: Photosystem I reaction center subunit IV (69 aa).

Belongs to the PsaE family.

It is found in the cellular thylakoid membrane. Its function is as follows. Stabilizes the interaction between PsaC and the PSI core, assists the docking of the ferredoxin to PSI and interacts with ferredoxin-NADP oxidoreductase. The sequence is that of Photosystem I reaction center subunit IV from Prochlorococcus marinus (strain MIT 9515).